Here is a 59-residue protein sequence, read N- to C-terminus: MAQVRVGQDESIESALRRFKRTVAKAGILAEAKRHRHFETPIEKRRRKAIARRRRYPRR.

Belongs to the bacterial ribosomal protein bS21 family.

The sequence is that of Small ribosomal subunit protein bS21A from Gloeobacter violaceus (strain ATCC 29082 / PCC 7421).